Consider the following 258-residue polypeptide: Methylthioribulose-1-phosphate dehydratase (258 aa).

Residues 1–21 form a disordered region; the sequence is MCSPTTENNNNNNDHLVQSSD. Cys105 is a binding site for substrate. His123 and His125 together coordinate Zn(2+). Residue Glu153 is the Proton donor/acceptor of the active site. His210 contributes to the Zn(2+) binding site.

The protein belongs to the aldolase class II family. MtnB subfamily. It depends on Zn(2+) as a cofactor.

It is found in the cytoplasm. The enzyme catalyses 5-(methylsulfanyl)-D-ribulose 1-phosphate = 5-methylsulfanyl-2,3-dioxopentyl phosphate + H2O. It participates in amino-acid biosynthesis; L-methionine biosynthesis via salvage pathway; L-methionine from S-methyl-5-thio-alpha-D-ribose 1-phosphate: step 2/6. Its function is as follows. Catalyzes the dehydration of methylthioribulose-1-phosphate (MTRu-1-P) into 2,3-diketo-5-methylthiopentyl-1-phosphate (DK-MTP-1-P). This Neurospora crassa (strain ATCC 24698 / 74-OR23-1A / CBS 708.71 / DSM 1257 / FGSC 987) protein is Methylthioribulose-1-phosphate dehydratase.